The primary structure comprises 216 residues: FMN-dependent NADH:quinone oxidoreductase (216 aa).

FMN-binding positions include Ser-10 and 15–17; that span reads SIS.

Belongs to the azoreductase type 1 family. As to quaternary structure, homodimer. FMN serves as cofactor.

The catalysed reaction is 2 a quinone + NADH + H(+) = 2 a 1,4-benzosemiquinone + NAD(+). It catalyses the reaction N,N-dimethyl-1,4-phenylenediamine + anthranilate + 2 NAD(+) = 2-(4-dimethylaminophenyl)diazenylbenzoate + 2 NADH + 2 H(+). In terms of biological role, quinone reductase that provides resistance to thiol-specific stress caused by electrophilic quinones. Functionally, also exhibits azoreductase activity. Catalyzes the reductive cleavage of the azo bond in aromatic azo compounds to the corresponding amines. This is FMN-dependent NADH:quinone oxidoreductase from Nocardia farcinica (strain IFM 10152).